The sequence spans 258 residues: Aquaglyceroporin (258 aa).

Over 1–11 the chain is Cytoplasmic; that stretch reads MHMLFYKSYVR. Residues 12–32 form a helical membrane-spanning segment; the sequence is EFIGEFLGTFVLMFLGEGATA. The Extracellular portion of the chain corresponds to 33–45; that stretch reads NFHTTGLSGDWYK. A helical transmembrane segment spans residues 46–66; that stretch reads LCLGWGLAVFFGILVSAKLSG. Glycerol is bound by residues Gly66, Ala67, and Asn70. Topologically, residues 67–87 are cytoplasmic; it reads AHLNLAVSIGLSSINKFDLKK. A helical transmembrane segment spans residues 88-108; sequence IPVYFFAQLLGAFVGTSTVYG. Topologically, residues 109-135 are extracellular; the sequence is LYHGFISNSKIPQFAWETSRNPSISLT. Residue Ser127 coordinates glycerol. A helical transmembrane segment spans residues 136–156; that stretch reads GAFFNELILTGILLLVILVVV. The Cytoplasmic segment spans residues 157–171; sequence DENICGKFHILKLSS. The chain crosses the membrane as a helical span at residues 172-192; that stretch reads VVGLIILCIGITFGGNTGFAL. Gly189, Phe190, Asn193, and Arg196 together coordinate glycerol. The Extracellular portion of the chain corresponds to 193–217; it reads NPSRDLGSRFLSLIAYGKDTFTKDN. A helical transmembrane segment spans residues 218–238; the sequence is FYFWVPLVAPCVGSVVFCQFY. Over 239-258 the chain is Cytoplasmic; it reads DKVICPLVDLANNEKDGVDL.

This sequence belongs to the MIP/aquaporin (TC 1.A.8) family. Homotetramer.

It localises to the cell membrane. It catalyses the reaction H2O(in) = H2O(out). The catalysed reaction is glycerol(in) = glycerol(out). It carries out the reaction urea(in) = urea(out). The enzyme catalyses NH4(+)(in) = NH4(+)(out). It catalyses the reaction methylamine(out) = methylamine(in). The catalysed reaction is formamide(out) = formamide(in). Mediates water and glycerol transport across the cell membrane. Permeable to sugar alcohols of up to five carbons and urea. Permeable to ammonia, methylamine and formamide. This Plasmodium falciparum (isolate 3D7) protein is Aquaglyceroporin.